Consider the following 709-residue polypeptide: Phosphoribosylformylglycinamidine synthase subunit PurL (709 aa).

The active site involves histidine 36. Residues tyrosine 39 and lysine 80 each contribute to the ATP site. Residue glutamate 82 participates in Mg(2+) binding. Residues 83–86 (SHNH) and arginine 105 each bind substrate. Histidine 84 (proton acceptor) is an active-site residue. Residue aspartate 106 coordinates Mg(2+). Substrate is bound at residue glutamine 226. Aspartate 252 contributes to the Mg(2+) binding site. 294–296 (ETQ) is a substrate binding site. The ATP site is built by aspartate 470 and glycine 507. Residue serine 510 participates in substrate binding.

It belongs to the FGAMS family. Monomer. Part of the FGAM synthase complex composed of 1 PurL, 1 PurQ and 2 PurS subunits.

It localises to the cytoplasm. It catalyses the reaction N(2)-formyl-N(1)-(5-phospho-beta-D-ribosyl)glycinamide + L-glutamine + ATP + H2O = 2-formamido-N(1)-(5-O-phospho-beta-D-ribosyl)acetamidine + L-glutamate + ADP + phosphate + H(+). It participates in purine metabolism; IMP biosynthesis via de novo pathway; 5-amino-1-(5-phospho-D-ribosyl)imidazole from N(2)-formyl-N(1)-(5-phospho-D-ribosyl)glycinamide: step 1/2. In terms of biological role, part of the phosphoribosylformylglycinamidine synthase complex involved in the purines biosynthetic pathway. Catalyzes the ATP-dependent conversion of formylglycinamide ribonucleotide (FGAR) and glutamine to yield formylglycinamidine ribonucleotide (FGAM) and glutamate. The FGAM synthase complex is composed of three subunits. PurQ produces an ammonia molecule by converting glutamine to glutamate. PurL transfers the ammonia molecule to FGAR to form FGAM in an ATP-dependent manner. PurS interacts with PurQ and PurL and is thought to assist in the transfer of the ammonia molecule from PurQ to PurL. In Saccharolobus islandicus (strain Y.N.15.51 / Yellowstone #2) (Sulfolobus islandicus), this protein is Phosphoribosylformylglycinamidine synthase subunit PurL.